The chain runs to 448 residues: NADH oxidase (448 aa).

FAD contacts are provided by residues 7–11, Cys42, Val80, 110–113, and Arg132; these read GSGAA and ATGA. Cys42 functions as the Redox-active in the catalytic mechanism. NAD(+)-binding positions include 152 to 167, Glu179, and Gly243; that span reads VAVV…MAYG. FAD is bound by residues 271–281, Gly299, and Thr300; that span reads TSIPNIYAVGD. Val328 lines the NAD(+) pocket. Tyr423 is an FAD binding site.

This sequence belongs to the class-III pyridine nucleotide-disulfide oxidoreductase family. It depends on FAD as a cofactor.

It carries out the reaction 2 NADH + O2 + 2 H(+) = 2 NAD(+) + 2 H2O. Functionally, catalyzes the four-electron reduction of molecular oxygen to water. In Methanocaldococcus jannaschii (strain ATCC 43067 / DSM 2661 / JAL-1 / JCM 10045 / NBRC 100440) (Methanococcus jannaschii), this protein is NADH oxidase.